The primary structure comprises 460 residues: Monocarboxylate transporter 12 (460 aa).

Over 1–10 (MTQEKRSLHK) the chain is Cytoplasmic. The next 12 membrane-spanning stretches (helical) occupy residues 11 to 31 (TPPD…VTVC), 58 to 78 (AWIH…GSYV), 86 to 106 (VGII…SFAT), 115 to 135 (LGVL…AMVG), 148 to 168 (IAMS…QLLI), 177 to 197 (LLIL…MRPI), 246 to 266 (FIIL…PFVY), 282 to 302 (AFLM…FGWV), 329 to 349 (FLPI…FGYF), 354 to 374 (VALI…SSAL), 376 to 396 (VVFF…GWLV), and 406 to 426 (FLLS…AKII). At 427-460 (NRIKKNPQATVVRSSDIKQEVWTNGDVSCLNAIS) the chain is on the cytoplasmic side.

This sequence belongs to the major facilitator superfamily. Monocarboxylate porter (TC 2.A.1.13) family.

It localises to the cell membrane. The protein localises to the basolateral cell membrane. It catalyses the reaction creatine(in) = creatine(out). The catalysed reaction is guanidinoacetate(in) = guanidinoacetate(out). Functions as a transporter for creatine and as well for its precursor guanidinoacetate. Transport of creatine and GAA is independent of resting membrane potential and extracellular Na(+), Cl(-), or pH. Contributes to the process of creatine biosynthesis and distribution. The sequence is that of Monocarboxylate transporter 12 (slc16a12) from Xenopus laevis (African clawed frog).